The sequence spans 337 residues: Ornithine carbamoyltransferase (337 aa).

Carbamoyl phosphate is bound by residues 57–60, Gln84, Arg108, and 135–138; these read STRT and HPTQ. Residues Asn167, Asp231, and 235 to 236 contribute to the L-ornithine site; that span reads SM. Carbamoyl phosphate contacts are provided by residues 272 to 273 and Arg317; that span reads CL.

This sequence belongs to the aspartate/ornithine carbamoyltransferase superfamily. OTCase family.

The protein resides in the cytoplasm. The catalysed reaction is carbamoyl phosphate + L-ornithine = L-citrulline + phosphate + H(+). It participates in amino-acid degradation; L-arginine degradation via ADI pathway; carbamoyl phosphate from L-arginine: step 2/2. In terms of biological role, reversibly catalyzes the transfer of the carbamoyl group from carbamoyl phosphate (CP) to the N(epsilon) atom of ornithine (ORN) to produce L-citrulline. In Streptococcus uberis (strain ATCC BAA-854 / 0140J), this protein is Ornithine carbamoyltransferase.